Consider the following 834-residue polypeptide: MNLTRREFAKANAAAIAAAAAGLPILVRASNLVTEADVTSLDWNKAPCRFCGTGCSVMVATRDGQVVATHGDIKAEVNRGINCVKGYFLSKIMYGSDRLTRPLLRMKDGKFDKQGEFQPISWEQAFDIMAEKFKAALKAKGPESVGMFGSGQWTVWEGYAANKLFKAGLRSNNIDPNARHCMASAVMGFMRSFGMDEPMGCYDDIEATDSFVLWGSNMAEMHPVLWSRVTDRRLSAPQVKVAVLSTFEHRSFELADIPMVFKPQTDLIILNYIANHIIESGAVNRDFVERHVRFAHGAEDIGYGLRPDDPLEKKAKNADKANTWSDIDFNAFAEFVKPYTLERAARESGVPAERLKALAELYAAPRRKVVSFWTMGFNQHTRGVWANNLIYNIHLLTGKISEPGNSPFSLTGQPSACGTAREVGTFSHRLPADLVVTNPKHRETAEKIWKVPAGTIQEKVGFHAVQQSRMLKDGVLNVYWTQVSNNMQAGPNVMQEVLPGWRNPDNFVIVSDVYPTVSAQAADLILPSAMWVEKEGAFGNAERRTQFWHQLVKAPGEAKSDLWQLVEFSKRFTTDEVWPAELLAKAPELKGKTLYEVLFRNGQVDRFPASDLAKGYANDEVDAFGFYIQKGLFEEYAAFGRGHGHDLAPFDAYHEARGLRWPVVDGKETRWRYREGYDPYVSKGSGVQFYGYPDKKAIVFALPYEPPAEAPDRDYPFWLATGRVLEHWHTGSMTARVPELYKAVPDAVVYMHPDDARQLKLRRGSEVRVVSRRGEIRARVETRGRNKPPQGLVFVPFFDANKLINKVTLDATDPISKQTDYKKCAVRIELLNLA.

Residues 1–29 constitute a signal peptide (tat-type signal); the sequence is MNLTRREFAKANAAAIAAAAAGLPILVRA. Residues 41–97 form the 4Fe-4S Mo/W bis-MGD-type domain; that stretch reads LDWNKAPCRFCGTGCSVMVATRDGQVVATHGDIKAEVNRGINCVKGYFLSKIMYGSD. The [4Fe-4S] cluster site is built by C48, C51, C55, and C83. Mo-bis(molybdopterin guanine dinucleotide) is bound by residues K85, Q152, N177, C181, 214 to 221, 245 to 249, 264 to 266, M375, Q379, N485, 511 to 512, K534, D561, and 721 to 730; these read WGSNMAEM, STFEH, QTD, SD, and TGRVLEHWHT. F797 is a substrate binding site. Mo-bis(molybdopterin guanine dinucleotide) contacts are provided by N805 and K822.

It belongs to the prokaryotic molybdopterin-containing oxidoreductase family. NasA/NapA/NarB subfamily. Component of the periplasmic nitrate reductase NapAB complex composed of NapA and NapB. It depends on [4Fe-4S] cluster as a cofactor. The cofactor is Mo-bis(molybdopterin guanine dinucleotide). Predicted to be exported by the Tat system. The position of the signal peptide cleavage has not been experimentally proven.

It localises to the periplasm. It carries out the reaction 2 Fe(II)-[cytochrome] + nitrate + 2 H(+) = 2 Fe(III)-[cytochrome] + nitrite + H2O. Its function is as follows. Catalytic subunit of the periplasmic nitrate reductase complex NapAB. Receives electrons from NapB and catalyzes the reduction of nitrate to nitrite. The sequence is that of Periplasmic nitrate reductase from Pseudomonas paraeruginosa (strain DSM 24068 / PA7) (Pseudomonas aeruginosa (strain PA7)).